The sequence spans 276 residues: MKEFNTRQIVEKYNFRFSKRLGQNFLTDNTVLDDIVENAEIQKDDFIIEIGPGVGTLTRRLLEKAKKVCAIELDESLIPIITNEMKEYDNFTLIHNDALKVDFNNIIGEEQSVKLVANLPYYVTTPIISKLLNEGYNFKSLTIMIQKEVGDRIAAKPSTKDYGALTLLVQYYCDVKVVRVVKPSCFIPQPKVDSLVIRLDKLEKPRVQVKDEKLFFNVIRSAFNMRRKTLWNAMKGLKLSSEDLEKAFEAAGIDSKRRGETLSIEEFGKLSDEIYR.

S-adenosyl-L-methionine-binding residues include Asn24, Leu26, Gly51, Glu72, Asp97, and Asn118.

Belongs to the class I-like SAM-binding methyltransferase superfamily. rRNA adenine N(6)-methyltransferase family. RsmA subfamily.

The protein resides in the cytoplasm. The catalysed reaction is adenosine(1518)/adenosine(1519) in 16S rRNA + 4 S-adenosyl-L-methionine = N(6)-dimethyladenosine(1518)/N(6)-dimethyladenosine(1519) in 16S rRNA + 4 S-adenosyl-L-homocysteine + 4 H(+). Functionally, specifically dimethylates two adjacent adenosines (A1518 and A1519) in the loop of a conserved hairpin near the 3'-end of 16S rRNA in the 30S particle. May play a critical role in biogenesis of 30S subunits. This chain is Ribosomal RNA small subunit methyltransferase A, found in Clostridium acetobutylicum (strain ATCC 824 / DSM 792 / JCM 1419 / IAM 19013 / LMG 5710 / NBRC 13948 / NRRL B-527 / VKM B-1787 / 2291 / W).